A 652-amino-acid polypeptide reads, in one-letter code: Acetyl-coenzyme A synthetase (652 aa).

Residues 189–192 (RGGK) and T311 each bind CoA. Residues 387-389 (GEP), 411-416 (DTWWQT), D500, and R515 contribute to the ATP site. S523 lines the CoA pocket. R526 lines the ATP pocket. Residues V537, H539, and V542 each coordinate Mg(2+). Position 584 (R584) interacts with CoA. K609 carries the post-translational modification N6-acetyllysine.

Belongs to the ATP-dependent AMP-binding enzyme family. It depends on Mg(2+) as a cofactor. Acetylated. Deacetylation by the SIR2-homolog deacetylase activates the enzyme.

The enzyme catalyses acetate + ATP + CoA = acetyl-CoA + AMP + diphosphate. In terms of biological role, catalyzes the conversion of acetate into acetyl-CoA (AcCoA), an essential intermediate at the junction of anabolic and catabolic pathways. AcsA undergoes a two-step reaction. In the first half reaction, AcsA combines acetate with ATP to form acetyl-adenylate (AcAMP) intermediate. In the second half reaction, it can then transfer the acetyl group from AcAMP to the sulfhydryl group of CoA, forming the product AcCoA. This Rhizobium rhizogenes (Agrobacterium rhizogenes) protein is Acetyl-coenzyme A synthetase.